The primary structure comprises 440 residues: MFLAQEIIRKKRDGHPLTEEEIRFFINGVRDNTVSEGQIAALAMTIYFHDMTMPERVALTLAMRDSGTVLNWKSLNLNGPIVDKHSTGGVGDVTSLMLGPMVAACGGYVPMISGRGLGHTGGTLDKLEAIPGFDIFPDDEKFRDIIRHVGVAIIGQTNSLAPADKRFYATRDITATVDSIPLITASILGKKLAEGLDALVMDVKVGSGAFMPTYQKSEELAESIVQVANGAGCQTTALLTDMNEVLASSAGNAVEVREAVQFLTGEYRNPRLFEVTMALCVEMLVSGRLADSRQQARQKLQDVLDNGKAAEVFARMVAAQNGPTDFVENYNKYLPTAVLSKPVFAEKAGFVTEMDTRALGMSVVTLGGGRRKATDAIDYSVGLSEIAALGTEINTDTPLAMIHANSEKSWQEAAAEVRKAMVIGETKRETSPMVYRQVSE.

This sequence belongs to the thymidine/pyrimidine-nucleoside phosphorylase family. As to quaternary structure, homodimer.

It carries out the reaction thymidine + phosphate = 2-deoxy-alpha-D-ribose 1-phosphate + thymine. It functions in the pathway pyrimidine metabolism; dTMP biosynthesis via salvage pathway; dTMP from thymine: step 1/2. In terms of biological role, the enzymes which catalyze the reversible phosphorolysis of pyrimidine nucleosides are involved in the degradation of these compounds and in their utilization as carbon and energy sources, or in the rescue of pyrimidine bases for nucleotide synthesis. The polypeptide is Thymidine phosphorylase (Proteus mirabilis (strain HI4320)).